The sequence spans 127 residues: Cyclin-dependent kinase 2-associated protein 2 (127 aa).

A disordered region spans residues methionine 1–phenylalanine 49. Residues alanine 9 to proline 44 are compositionally biased toward low complexity. An interaction with CDK2 region spans residues proline 65–isoleucine 107.

The protein belongs to the CDK2AP family. As to quaternary structure, component of the nucleosome remodeling and deacetylase (NuRD) repressor complex, composed of core proteins MTA1, MTA2, MTA3, RBBP4, RBBP7, HDAC1, HDAC2, MBD2, MBD3, and peripherally associated proteins CDK2AP1, CDK2AP2, GATAD2A, GATAD2B, CHD3, CHD4 and CHD5. The exact stoichiometry of the NuRD complex is unknown, and some subunits such as MBD2 and MBD3, GATAD2A and GATAD2B, and CHD3, CHD4 and CHD5 define mutually exclusive NuRD complexes. Interacts with CDK2AP1. Interacts with CDK2. Interacts with MAPK1. Phosphorylated by MAPK1 and CDK2.

It localises to the cytoplasm. It is found in the nucleus. Its function is as follows. Acts as a component of the histone deacetylase NuRD complex which participates in the remodeling of chromatin. Inhibits cell cycle G1/S phase transition by repressing CDK2 expression and activation; represses CDK2 activation by inhibiting its interaction with cyclin E and A. Plays a role in regulating the self-renewal of embryonic stem cells (ESCs) and in maintaining cell survival during terminal differentiation of ESCs. Regulates microtubule organization of metaphase II oocytes. The sequence is that of Cyclin-dependent kinase 2-associated protein 2 (CDK2AP2) from Bos taurus (Bovine).